The following is a 131-amino-acid chain: Small ribosomal subunit protein uS8 (131 aa).

Belongs to the universal ribosomal protein uS8 family. Part of the 30S ribosomal subunit. Contacts proteins S5 and S12.

Its function is as follows. One of the primary rRNA binding proteins, it binds directly to 16S rRNA central domain where it helps coordinate assembly of the platform of the 30S subunit. The sequence is that of Small ribosomal subunit protein uS8 from Clostridium novyi (strain NT).